Consider the following 133-residue polypeptide: S-protein homolog 21 (133 aa).

A signal peptide spans 1–21; that stretch reads MKNLSIFLFVVGLCMISDVYG.

The protein belongs to the plant self-incompatibility (S1) protein family.

The protein resides in the secreted. This Arabidopsis thaliana (Mouse-ear cress) protein is S-protein homolog 21.